We begin with the raw amino-acid sequence, 416 residues long: Serine hydroxymethyltransferase (416 aa).

Residues Leu-117 and 121 to 123 (GHL) each bind (6S)-5,6,7,8-tetrahydrofolate. An N6-(pyridoxal phosphate)lysine modification is found at Lys-226. Residue Glu-242 participates in (6S)-5,6,7,8-tetrahydrofolate binding.

Belongs to the SHMT family. In terms of assembly, homodimer. Pyridoxal 5'-phosphate is required as a cofactor.

It is found in the cytoplasm. It carries out the reaction (6R)-5,10-methylene-5,6,7,8-tetrahydrofolate + glycine + H2O = (6S)-5,6,7,8-tetrahydrofolate + L-serine. It participates in one-carbon metabolism; tetrahydrofolate interconversion. The protein operates within amino-acid biosynthesis; glycine biosynthesis; glycine from L-serine: step 1/1. Functionally, catalyzes the reversible interconversion of serine and glycine with tetrahydrofolate (THF) serving as the one-carbon carrier. This reaction serves as the major source of one-carbon groups required for the biosynthesis of purines, thymidylate, methionine, and other important biomolecules. Also exhibits THF-independent aldolase activity toward beta-hydroxyamino acids, producing glycine and aldehydes, via a retro-aldol mechanism. The sequence is that of Serine hydroxymethyltransferase from Endomicrobium trichonymphae.